Consider the following 99-residue polypeptide: Ubiquitin-related modifier 1 homolog (99 aa).

Gly-99 bears the 1-thioglycine mark. Gly-99 participates in a covalent cross-link: Glycyl lysine isopeptide (Gly-Lys) (interchain with K-? in acceptor proteins).

This sequence belongs to the URM1 family. In terms of processing, C-terminal thiocarboxylation occurs in 2 steps, it is first acyl-adenylated (-COAMP) via the hesA/moeB/thiF part of the MOCS3 homolog, then thiocarboxylated (-COSH) via the rhodanese domain of the MOCS3 homolog.

It is found in the cytoplasm. The protein operates within tRNA modification; 5-methoxycarbonylmethyl-2-thiouridine-tRNA biosynthesis. Acts as a sulfur carrier required for 2-thiolation of mcm(5)S(2)U at tRNA wobble positions of cytosolic tRNA(Lys), tRNA(Glu) and tRNA(Gln). Serves as sulfur donor in tRNA 2-thiolation reaction by being thiocarboxylated (-COSH) at its C-terminus by MOCS3. The sulfur is then transferred to tRNA to form 2-thiolation of mcm(5)S(2)U. Also acts as a ubiquitin-like protein (UBL) that is covalently conjugated via an isopeptide bond to lysine residues of target proteins. The thiocarboxylated form serves as substrate for conjugation and oxidative stress specifically induces the formation of UBL-protein conjugates. This chain is Ubiquitin-related modifier 1 homolog, found in Chlamydomonas reinhardtii (Chlamydomonas smithii).